Here is a 376-residue protein sequence, read N- to C-terminus: Chaperone protein DnaJ (376 aa).

The J domain occupies 5-70 (DYYEILGVSK…QKRAAYDQYG (66 aa)). The CR-type zinc finger occupies 131–209 (GVTKEIRIPT…CHGHGRVERS (79 aa)). Zn(2+)-binding residues include cysteine 144, cysteine 147, cysteine 161, cysteine 164, cysteine 183, cysteine 186, cysteine 197, and cysteine 200. CXXCXGXG motif repeat units lie at residues 144-151 (CDVCHGSG), 161-168 (CPTCHGSG), 183-190 (CPHCQGRG), and 197-204 (CNKCHGHG).

It belongs to the DnaJ family. Homodimer. Zn(2+) serves as cofactor.

It is found in the cytoplasm. In terms of biological role, participates actively in the response to hyperosmotic and heat shock by preventing the aggregation of stress-denatured proteins and by disaggregating proteins, also in an autonomous, DnaK-independent fashion. Unfolded proteins bind initially to DnaJ; upon interaction with the DnaJ-bound protein, DnaK hydrolyzes its bound ATP, resulting in the formation of a stable complex. GrpE releases ADP from DnaK; ATP binding to DnaK triggers the release of the substrate protein, thus completing the reaction cycle. Several rounds of ATP-dependent interactions between DnaJ, DnaK and GrpE are required for fully efficient folding. Also involved, together with DnaK and GrpE, in the DNA replication of plasmids through activation of initiation proteins. The protein is Chaperone protein DnaJ of Escherichia coli (strain K12 / DH10B).